The sequence spans 1043 residues: Isoleucine--tRNA ligase (1043 aa).

The 'HIGH' region signature appears at 48 to 58 (PFATGLPHYGH). A 'KMSKS' region motif is present at residues 591–595 (KMSKR). Lysine 594 lines the ATP pocket.

It belongs to the class-I aminoacyl-tRNA synthetase family. IleS type 2 subfamily. Monomer. Requires Zn(2+) as cofactor.

Its subcellular location is the cytoplasm. The enzyme catalyses tRNA(Ile) + L-isoleucine + ATP = L-isoleucyl-tRNA(Ile) + AMP + diphosphate. In terms of biological role, catalyzes the attachment of isoleucine to tRNA(Ile). As IleRS can inadvertently accommodate and process structurally similar amino acids such as valine, to avoid such errors it has two additional distinct tRNA(Ile)-dependent editing activities. One activity is designated as 'pretransfer' editing and involves the hydrolysis of activated Val-AMP. The other activity is designated 'posttransfer' editing and involves deacylation of mischarged Val-tRNA(Ile). The sequence is that of Isoleucine--tRNA ligase from Chlamydia pneumoniae (Chlamydophila pneumoniae).